A 557-amino-acid chain; its full sequence is Aerobic glycerol-3-phosphate dehydrogenase (557 aa).

Position 21–49 (21–49 (DLVIIGGGITGAGIALDASERGMKVALVE)) interacts with FAD.

Belongs to the FAD-dependent glycerol-3-phosphate dehydrogenase family. FAD serves as cofactor.

The protein resides in the cytoplasm. The enzyme catalyses a quinone + sn-glycerol 3-phosphate = dihydroxyacetone phosphate + a quinol. It participates in polyol metabolism; glycerol degradation via glycerol kinase pathway; glycerone phosphate from sn-glycerol 3-phosphate (aerobic route): step 1/1. This Staphylococcus aureus (strain USA300) protein is Aerobic glycerol-3-phosphate dehydrogenase (glpD).